A 152-amino-acid chain; its full sequence is Ferredoxin-thioredoxin reductase catalytic chain, chloroplastic (152 aa).

A chloroplast-targeting transit peptide spans 1 to 38 (MTSTVTTTVGCGGLPVRPLSTATRGRPRRCAVRAQAAG). Position 91 (C91) interacts with [4Fe-4S] cluster. Residue C93 is the Nucleophile of the active site. A disulfide bond links C93 and C123. 3 residues coordinate [4Fe-4S] cluster: C110, C112, and C121.

This sequence belongs to the ferredoxin thioredoxin reductase beta subunit family. Heterodimer of subunit A (variable subunit) and subunit B (catalytic subunit). Heterodimeric FTR forms a complex with ferredoxin and thioredoxin. [4Fe-4S] cluster is required as a cofactor.

It localises to the plastid. Its subcellular location is the chloroplast. The enzyme catalyses [thioredoxin]-disulfide + 2 reduced [2Fe-2S]-[ferredoxin] + 2 H(+) = [thioredoxin]-dithiol + 2 oxidized [2Fe-2S]-[ferredoxin]. In terms of biological role, catalytic subunit of the ferredoxin-thioredoxin reductase (FTR), which catalyzes the two-electron reduction of thioredoxins by the electrons provided by reduced ferredoxin. The chain is Ferredoxin-thioredoxin reductase catalytic chain, chloroplastic (FTRC) from Zea mays (Maize).